A 353-amino-acid polypeptide reads, in one-letter code: Cellulose-complementing protein (353 aa).

Disordered stretches follow at residues 1 to 21, 75 to 94, and 117 to 337; these read MSASGSDEVAGGGQAGSPQDF, PQIAVAPPPPPVVPDPPAIV, and AVPA…SPRP. The span at 80-91 shows a compositional bias: pro residues; it reads APPPPPVVPDPP. Low complexity-rich tracts occupy residues 117–132 and 142–164; these read AVPAEPPVQEAPVQAA and IAEQAPPAAPDPASVPYANVAAA. Residues 165-175 show a composition bias toward pro residues; that stretch reads PVPPDPAPVTP. Composition is skewed to polar residues over residues 196-226 and 278-304; these read QVRTVQEGATPSRVPSRSMNAFPRTSASSIS and STRSVRSNVSRMTSMTKTDTNSSQASR.

This Komagataeibacter xylinus (Gluconacetobacter xylinus) protein is Cellulose-complementing protein (ccpAX).